A 464-amino-acid polypeptide reads, in one-letter code: Soluble pyridine nucleotide transhydrogenase (464 aa).

Residue 35–44 participates in FAD binding; it reads DDRRQVGGNC.

The protein belongs to the class-I pyridine nucleotide-disulfide oxidoreductase family. FAD serves as cofactor.

The protein localises to the cytoplasm. The enzyme catalyses NAD(+) + NADPH = NADH + NADP(+). Its function is as follows. Conversion of NADPH, generated by peripheral catabolic pathways, to NADH, which can enter the respiratory chain for energy generation. This Pseudomonas putida (strain ATCC 47054 / DSM 6125 / CFBP 8728 / NCIMB 11950 / KT2440) protein is Soluble pyridine nucleotide transhydrogenase.